We begin with the raw amino-acid sequence, 221 residues long: MKKEFAVIGLGRFGGSICKALSEEGVEVMAMDIDEDKVNEYAKIASHAVIGDSTDESVLKNLGLRNFDHVIVAIGENIQASILTTLILKELGVHTITVKAQNDYHEKVLSKIGADHIVHPERDMAKRIAHNIVSNNVLDYLELSEEHSLVEIVANSRLAGNTLLDLDIRAKYGINIVAIKRGKEVIVSPLATEVIHQEDILIVIGSVTDISRFEKRVLHTK.

The RCK N-terminal domain occupies 2–118 (KKEFAVIGLG…LSKIGADHIV (117 aa)). NAD(+) contacts are provided by residues arginine 12, 32–34 (DID), 52–53 (DS), 74–76 (IGE), 99–101 (KAQ), histidine 105, and glutamate 121. The region spanning 135 to 219 (NNVLDYLELS…ISRFEKRVLH (85 aa)) is the RCK C-terminal domain.

The protein belongs to the KtrA potassium transport family. In terms of assembly, homodimer, tetramer (dimer of homodimer) and octamer (tetramer of homodimer). Part of the KtrCD complex formed by an octameric catalytic ring of KtrC and a membrane associated dimer of KtrD forming a potassium channel.

The protein resides in the cell membrane. In terms of biological role, catalytic subunit of the KtrCD potassium uptake transporter. The 2 major potassium transporter complexes KtrAB and KtrCD confer resistance to both suddenly imposed and prolonged osmotic stress. In Bacillus subtilis (strain 168), this protein is Ktr system potassium uptake protein C (ktrC).